The primary structure comprises 324 residues: Chorismate mutase 1, chloroplastic (324 aa).

A chloroplast-targeting transit peptide spans 1 to 56 (METQLLRFPSHTITSSITTNSSRNTTPFLPHKKWSHFVKFQLVNSSSSIKHGIRPL). R70 is an L-phenylalanine binding site. Residues 70–324 (RVDETESYTL…QVQYLLRRLD (255 aa)) form the Chorismate mutase domain. L-tyrosine contacts are provided by residues R141 and 202–205 (NYGS). 202–205 (NYGS) serves as a coordination point for L-phenylalanine.

In terms of assembly, homodimer. Mostly expressed in petal tubes and petal limbs, and, to a lower extent, in stigmas, anthers, sepals, roots, stems and leaves.

Its subcellular location is the plastid. It localises to the chloroplast stroma. It catalyses the reaction chorismate = prephenate. It participates in metabolic intermediate biosynthesis; prephenate biosynthesis; prephenate from chorismate: step 1/1. Allosterically activated by tryptophan but not by tyrosine and phenylalanine. Component of the floral volatile benzenoid/phenylpropanoid (FVBPs) biosynthetic pathway. Mediates the conversion of chorismate to prephenate, thus coupling metabolites from the shikimate pathway to the synthesis of FVBPs in the corolla. The chain is Chorismate mutase 1, chloroplastic from Petunia hybrida (Petunia).